We begin with the raw amino-acid sequence, 323 residues long: Mortality factor 4-like protein 1 (323 aa).

Residues 12 to 62 (QEGERVLCFHGPLLYEAKCVKVAIKDKQVKYFIHHSGWNKNWDEWVPESRV) form the Tudor-knot domain. Residues 76 to 143 (LQKANQEQYA…RKKRARVDPT (68 aa)) are disordered. Residues 94–227 (PGKKTSGLQQ…VAGIKEYFNV (134 aa)) form a sufficient for interaction with SIN3A region. The Nuclear localization signal signature appears at 96-107 (KKTSGLQQKNVD). Lysine 104 is modified (N6-acetyllysine). Residues 125 to 191 (STSETPQPPR…FYLPAKKNVD (67 aa)) form an interaction with RB1-1 region. Positions 149–303 (TFMNRVEVKV…FLKYLAKNSA (155 aa)) are sufficient for interaction with PHF12. Positions 152–323 (NRVEVKVKIP…APPEYHRKAV (172 aa)) constitute an MRG domain. Positions 284–305 (LALLLNYLHDFLKYLAKNSATL) are interaction with RB1-2.

As to quaternary structure, component of the NuA4 histone acetyltransferase complex which contains the catalytic subunit KAT5/TIP60 and the subunits EP400, TRRAP/PAF400, BRD8/SMAP, EPC1, DMAP1/DNMAP1, RUVBL1/TIP49, RUVBL2, ING3, actin, ACTL6A/BAF53A, MORF4L1/MRG15, MORF4L2/MRGX, MRGBP, YEATS4/GAS41, VPS72/YL1 and MEAF6. The NuA4 complex interacts with MYC and the adenovirus E1A protein. MORF4L1 may also participate in the formation of NuA4 related complexes which lack the KAT5/TIP60 catalytic subunit, but which include the SWI/SNF related protein SRCAP. Component of the mSin3A histone deacetylase complex, which includes SIN3A, HDAC2, ARID4B, MORF4L1, RBBP4/RbAp48, and RBBP7/RbAp46. May also interact with PHF12 and one or more as yet undefined members of the TLE (transducin-like enhancer of split) family of transcriptional repressors. Component of the SIN3B complex, which includes SIN3B, HDAC2 or HDAC1, PHF12 and MORF4L1. Interacts with RB1 and KAT8. Interacts with the N-terminus of MRFAP1. Found in a complex composed of MORF4L1, MRFAP1 and RB1. Interacts with the entire BRCA complex, which contains BRCA1, PALB2, BRCA2 and RAD51. Interacts with PALB2. Forms a complex with MSL1 and NUPR1.

The protein resides in the nucleus. Its function is as follows. Component of the NuA4 histone acetyltransferase (HAT) complex which is involved in transcriptional activation of select genes principally by acetylation of nucleosomal histones H4 and H2A. This modification may both alter nucleosome - DNA interactions and promote interaction of the modified histones with other proteins which positively regulate transcription. This complex may be required for the activation of transcriptional programs associated with oncogene and proto-oncogene mediated growth induction, tumor suppressor mediated growth arrest and replicative senescence, apoptosis, and DNA repair. The NuA4 complex ATPase and helicase activities seem to be, at least in part, contributed by the association of RUVBL1 and RUVBL2 with EP400. NuA4 may also play a direct role in DNA repair when directly recruited to sites of DNA damage. As part of the SIN3B complex represses transcription and counteracts the histone acetyltransferase activity of EP300 through the recognition H3K27ac marks by PHF12 and the activity of the histone deacetylase HDAC2. SIN3B complex is recruited downstream of the constitutively active genes transcriptional start sites through interaction with histones and mitigates histone acetylation and RNA polymerase II progression within transcribed regions contributing to the regulation of transcription. Required for homologous recombination repair (HRR) and resistance to mitomycin C (MMC). Involved in the localization of PALB2, BRCA2 and RAD51, but not BRCA1, to DNA-damage foci. The chain is Mortality factor 4-like protein 1 (MORF4L1) from Pongo abelii (Sumatran orangutan).